Consider the following 159-residue polypeptide: SsrA-binding protein (159 aa).

Residues K131–G159 are disordered. The span at D137–G159 shows a compositional bias: basic and acidic residues.

Belongs to the SmpB family.

The protein resides in the cytoplasm. Required for rescue of stalled ribosomes mediated by trans-translation. Binds to transfer-messenger RNA (tmRNA), required for stable association of tmRNA with ribosomes. tmRNA and SmpB together mimic tRNA shape, replacing the anticodon stem-loop with SmpB. tmRNA is encoded by the ssrA gene; the 2 termini fold to resemble tRNA(Ala) and it encodes a 'tag peptide', a short internal open reading frame. During trans-translation Ala-aminoacylated tmRNA acts like a tRNA, entering the A-site of stalled ribosomes, displacing the stalled mRNA. The ribosome then switches to translate the ORF on the tmRNA; the nascent peptide is terminated with the 'tag peptide' encoded by the tmRNA and targeted for degradation. The ribosome is freed to recommence translation, which seems to be the essential function of trans-translation. The polypeptide is SsrA-binding protein (Rhizobium leguminosarum bv. trifolii (strain WSM2304)).